Reading from the N-terminus, the 219-residue chain is MAYFISFEGIEGCGKTTQLKLAAQYLRTLKIPVGTTEEPGGTPLGKKIRNILLNRGPFEICAEAETLLFVAARAQHVREVILPSLARGQWILCDRFSDATAVYQGCVRGIDEAWIRQLDSFATSFLKPNLTLLFDLPAETGLHRAMQRMTGIPENSREDRFEQEGLNFHEKIREGYLALARQESERFRIINAAADIPSIHREVCRHLDVLRQQPEAGLP.

Gly9–Thr16 contacts ATP.

Belongs to the thymidylate kinase family.

It catalyses the reaction dTMP + ATP = dTDP + ADP. Phosphorylation of dTMP to form dTDP in both de novo and salvage pathways of dTTP synthesis. This chain is Thymidylate kinase, found in Syntrophus aciditrophicus (strain SB).